Reading from the N-terminus, the 145-residue chain is 3-hydroxyacyl-[acyl-carrier-protein] dehydratase FabZ (145 aa).

His47 is an active-site residue.

Belongs to the thioester dehydratase family. FabZ subfamily.

It localises to the cytoplasm. It carries out the reaction a (3R)-hydroxyacyl-[ACP] = a (2E)-enoyl-[ACP] + H2O. Functionally, involved in unsaturated fatty acids biosynthesis. Catalyzes the dehydration of short chain beta-hydroxyacyl-ACPs and long chain saturated and unsaturated beta-hydroxyacyl-ACPs. The polypeptide is 3-hydroxyacyl-[acyl-carrier-protein] dehydratase FabZ (Polaromonas sp. (strain JS666 / ATCC BAA-500)).